Reading from the N-terminus, the 296-residue chain is 33 kDa chaperonin (296 aa).

2 cysteine pairs are disulfide-bonded: cysteine 233–cysteine 235 and cysteine 267–cysteine 270.

It belongs to the HSP33 family. In terms of processing, under oxidizing conditions two disulfide bonds are formed involving the reactive cysteines. Under reducing conditions zinc is bound to the reactive cysteines and the protein is inactive.

Its subcellular location is the cytoplasm. Redox regulated molecular chaperone. Protects both thermally unfolding and oxidatively damaged proteins from irreversible aggregation. Plays an important role in the bacterial defense system toward oxidative stress. This Actinobacillus pleuropneumoniae serotype 3 (strain JL03) protein is 33 kDa chaperonin.